Here is a 198-residue protein sequence, read N- to C-terminus: Na(+)-translocating NADH-quinone reductase subunit E (198 aa).

Transmembrane regions (helical) follow at residues 11-31, 35-55, 77-97, 110-130, 140-160, and 176-196; these read SVFIENMALSFFLGMCTFLAV, VSTAFGLGVAVTVVLGISVPV, FLNFITFIGVIAALVQILEMI, GIFLPLITVNCAIFGGVSFMV, VVYGIGAGTGWMLAIVALAGI, and LGITFITVGLMALGFMSFSGV.

It belongs to the NqrDE/RnfAE family. Composed of six subunits; NqrA, NqrB, NqrC, NqrD, NqrE and NqrF.

Its subcellular location is the cell inner membrane. It carries out the reaction a ubiquinone + n Na(+)(in) + NADH + H(+) = a ubiquinol + n Na(+)(out) + NAD(+). In terms of biological role, NQR complex catalyzes the reduction of ubiquinone-1 to ubiquinol by two successive reactions, coupled with the transport of Na(+) ions from the cytoplasm to the periplasm. NqrA to NqrE are probably involved in the second step, the conversion of ubisemiquinone to ubiquinol. This Histophilus somni (strain 129Pt) (Haemophilus somnus) protein is Na(+)-translocating NADH-quinone reductase subunit E.